The chain runs to 307 residues: Peroxisomal membrane protein PMP34 (307 aa).

The Cytoplasmic portion of the chain corresponds to 1-9 (MASVLSYES). Positions 1–147 (MASVLSYESL…NEDIIPTNYK (147 aa)) are necessary for targeting to peroxisomes and interaction with PEX19. Solcar repeat units lie at residues 7 to 92 (YESL…LKAV), 99 to 192 (SSTG…LKRQ), and 200 to 294 (LSSL…LTAA). Residues 10-30 (LVHAVAGAVGSVTAMTVFFPL) form a helical membrane-spanning segment. The Lumenal portion of the chain corresponds to 31 to 66 (DTARLRLQVDEKRKSKTTHAVLLEIIKEEGLLAPYR). Residues 67-87 (GWFPVISSLCCSNFVYFYTFN) form a helical membrane-spanning segment. The Cytoplasmic portion of the chain corresponds to 88–104 (SLKAVWVKGQRSSTGKD). The helical transmembrane segment at 105–125 (LVVGFVAGVVNVLLTTPLWVV) threads the bilayer. Over 126–160 (NTRLKLQGAKFRNEDIIPTNYKGIIDAFHQIIRDE) the chain is Lumenal. The helical transmembrane segment at 161 to 181 (GILALWNGTFPSLLLVFNPAI) threads the bilayer. Over 182-202 (QFMFYEGLKRQLLKKRMKLSS) the chain is Cytoplasmic. The Peroxisome localization signal signature appears at 190 to 199 (KRQLLKKRMK). Residues 203-223 (LDVFIIGAIAKAIATTVTYPM) traverse the membrane as a helical segment. Residues 224–280 (QTVQSILRFGRHRLNPENRTLGSLRNVLSLLHQRVKRFGIMGLYKGLEAKLLQTVLT) are Lumenal-facing. The segment at 244-307 (LGSLRNVLSL…VMGLKSTHKH (64 aa)) is necessary for targeting to peroxisomes and interaction with PEX19. The chain crosses the membrane as a helical span at residues 281 to 301 (AALMFLVYEKLTAATFTVMGL). Topologically, residues 302 to 307 (KSTHKH) are cytoplasmic.

It belongs to the mitochondrial carrier (TC 2.A.29) family. Interacts (via N- and C-terminus peroxisomal targeting regions) with PEX19; the interaction occurs with the newly synthesized SLC25A17 in the cytosol. In terms of tissue distribution, expressed in liver, kidney, heart, spleen, muscle and lung.

The protein localises to the cytoplasm. Its subcellular location is the peroxisome membrane. The enzyme catalyses AMP(out) + CoA(in) = AMP(in) + CoA(out). The catalysed reaction is 3'-dephospho-CoA(in) + AMP(out) = 3'-dephospho-CoA(out) + AMP(in). It carries out the reaction acetyl-CoA(in) + AMP(out) = acetyl-CoA(out) + AMP(in). It catalyses the reaction AMP(in) + NAD(+)(out) = AMP(out) + NAD(+)(in). The enzyme catalyses FAD(in) + AMP(out) = FAD(out) + AMP(in). The catalysed reaction is FMN(in) + AMP(out) = FMN(out) + AMP(in). It carries out the reaction AMP(in) + ADP(out) = AMP(out) + ADP(in). It catalyses the reaction adenosine 3',5'-bisphosphate(in) + AMP(out) = adenosine 3',5'-bisphosphate(out) + AMP(in). The enzyme catalyses FAD(in) + CoA(out) = FAD(out) + CoA(in). The catalysed reaction is FAD(in) + adenosine 3',5'-bisphosphate(out) = FAD(out) + adenosine 3',5'-bisphosphate(in). It carries out the reaction FMN(in) + CoA(out) = FMN(out) + CoA(in). It catalyses the reaction FMN(in) + adenosine 3',5'-bisphosphate(out) = FMN(out) + adenosine 3',5'-bisphosphate(in). The enzyme catalyses FAD(out) + NAD(+)(in) = FAD(in) + NAD(+)(out). The catalysed reaction is FMN(out) + NAD(+)(in) = FMN(in) + NAD(+)(out). It carries out the reaction NAD(+)(in) + CoA(out) = NAD(+)(out) + CoA(in). It catalyses the reaction adenosine 3',5'-bisphosphate(out) + NAD(+)(in) = adenosine 3',5'-bisphosphate(in) + NAD(+)(out). The enzyme catalyses FMN(out) + ADP(in) = FMN(in) + ADP(out). The catalysed reaction is FAD(out) + ADP(in) = FAD(in) + ADP(out). It carries out the reaction ADP(out) + CoA(in) = ADP(in) + CoA(out). It catalyses the reaction adenosine 3',5'-bisphosphate(in) + ADP(out) = adenosine 3',5'-bisphosphate(out) + ADP(in). Its function is as follows. Peroxisomal transporter for multiple cofactors like coenzyme A (CoA), flavin adenine dinucleotide (FAD), flavin mononucleotide (FMN) and nucleotide adenosine monophosphate (AMP), and to a lesser extent for nicotinamide adenine dinucleotide (NAD(+)), adenosine diphosphate (ADP) and adenosine 3',5'-diphosphate (PAP). May catalyze the transport of free CoA, FAD and NAD(+) from the cytosol into the peroxisomal matrix by a counter-exchange mechanism. The polypeptide is Peroxisomal membrane protein PMP34 (Slc25a17) (Mus musculus (Mouse)).